Here is a 416-residue protein sequence, read N- to C-terminus: Glutamyl-tRNA reductase (416 aa).

Substrate is bound by residues T46–R49, S97, D102–E104, and Q108. C47 serves as the catalytic Nucleophile. NADP(+) is bound at residue G178–A183.

The protein belongs to the glutamyl-tRNA reductase family. Homodimer.

The catalysed reaction is (S)-4-amino-5-oxopentanoate + tRNA(Glu) + NADP(+) = L-glutamyl-tRNA(Glu) + NADPH + H(+). The protein operates within porphyrin-containing compound metabolism; protoporphyrin-IX biosynthesis; 5-aminolevulinate from L-glutamyl-tRNA(Glu): step 1/2. Its function is as follows. Catalyzes the NADPH-dependent reduction of glutamyl-tRNA(Glu) to glutamate 1-semialdehyde (GSA). The polypeptide is Glutamyl-tRNA reductase (Aeropyrum pernix (strain ATCC 700893 / DSM 11879 / JCM 9820 / NBRC 100138 / K1)).